The primary structure comprises 269 residues: tRNA uridine(34) hydroxylase (269 aa).

The Rhodanese domain occupies Ser121–Gly214. Cys174 serves as the catalytic Cysteine persulfide intermediate.

This sequence belongs to the TrhO family.

The catalysed reaction is uridine(34) in tRNA + AH2 + O2 = 5-hydroxyuridine(34) in tRNA + A + H2O. In terms of biological role, catalyzes oxygen-dependent 5-hydroxyuridine (ho5U) modification at position 34 in tRNAs. This chain is tRNA uridine(34) hydroxylase, found in Wolbachia sp. subsp. Brugia malayi (strain TRS).